Consider the following 439-residue polypeptide: Serine/threonine-protein kinase 2 (439 aa).

Residues 87-439 enclose the Protein kinase domain; sequence NDDFYHISTG…IFSDWINGGN (353 aa). ATP is bound by residues 93 to 101 and Lys117; that span reads ISTGGYGIV. Catalysis depends on Asp307, which acts as the Proton acceptor.

This sequence belongs to the protein kinase superfamily. Ser/Thr protein kinase family. Poxviruses subfamily. Phosphorylated in vivo. Autophosphorylated in vitro.

The protein localises to the host endoplasmic reticulum. It localises to the host endoplasmic reticulum-Golgi intermediate compartment. The enzyme catalyses L-seryl-[protein] + ATP = O-phospho-L-seryl-[protein] + ADP + H(+). The catalysed reaction is L-threonyl-[protein] + ATP = O-phospho-L-threonyl-[protein] + ADP + H(+). Functionally, essential serine-protein kinase involved in the early stage of virion morphogenesis. In Vaccinia virus (strain Copenhagen) (VACV), this protein is Serine/threonine-protein kinase 2 (OPG054).